Reading from the N-terminus, the 287-residue chain is MRFTKMEALGNDFVVLDGIRQRLHLTPETIRTLADRRRGVGCDQLLIAEPPAHIAADVRYRIFNADGTEVEHCGNGVRCLARFLVDEGLAAPGVLRIETDGRITEAEPRDDGQVSVDMGPPELEPARIPFQAPVRQEAYRLATSRGEQTIGAVSMGNPHAVLRVDDMTGAPVAELGPEIERHPRFPRRVNVGFMEVCTRDRIRLRVFERGVGETPACGTGACAAVVAGRLRDWLDAPVTVELTGGVLVIHWLGPGRSVWMTGPARTVFRGEIELPASAAATPRGPTR.

N11, Q44, and N64 together coordinate substrate. Residue C73 is the Proton donor of the active site. Substrate contacts are provided by residues 74–75, N157, N190, and 208–209; these read GN and ER. The active-site Proton acceptor is C217. 218–219 serves as a coordination point for substrate; the sequence is GT.

The protein belongs to the diaminopimelate epimerase family. As to quaternary structure, homodimer.

It is found in the cytoplasm. The enzyme catalyses (2S,6S)-2,6-diaminopimelate = meso-2,6-diaminopimelate. Its pathway is amino-acid biosynthesis; L-lysine biosynthesis via DAP pathway; DL-2,6-diaminopimelate from LL-2,6-diaminopimelate: step 1/1. Catalyzes the stereoinversion of LL-2,6-diaminopimelate (L,L-DAP) to meso-diaminopimelate (meso-DAP), a precursor of L-lysine and an essential component of the bacterial peptidoglycan. This Halorhodospira halophila (strain DSM 244 / SL1) (Ectothiorhodospira halophila (strain DSM 244 / SL1)) protein is Diaminopimelate epimerase.